The sequence spans 165 residues: NADPH-dependent 7-cyano-7-deazaguanine reductase (165 aa).

Residue cysteine 56 is the Thioimide intermediate of the active site. Aspartate 63 functions as the Proton donor in the catalytic mechanism. Residues 78–80 and 97–98 contribute to the substrate site; these read VES and HE.

It belongs to the GTP cyclohydrolase I family. QueF type 1 subfamily.

The protein resides in the cytoplasm. It catalyses the reaction 7-aminomethyl-7-carbaguanine + 2 NADP(+) = 7-cyano-7-deazaguanine + 2 NADPH + 3 H(+). The protein operates within tRNA modification; tRNA-queuosine biosynthesis. Catalyzes the NADPH-dependent reduction of 7-cyano-7-deazaguanine (preQ0) to 7-aminomethyl-7-deazaguanine (preQ1). This Bacillus anthracis (strain A0248) protein is NADPH-dependent 7-cyano-7-deazaguanine reductase.